The sequence spans 306 residues: Ribosomal RNA small subunit methyltransferase H (306 aa).

Residues 33–35 (GGY), aspartate 51, phenylalanine 78, aspartate 96, and glutamine 103 each bind S-adenosyl-L-methionine.

It belongs to the methyltransferase superfamily. RsmH family.

The protein resides in the cytoplasm. It carries out the reaction cytidine(1402) in 16S rRNA + S-adenosyl-L-methionine = N(4)-methylcytidine(1402) in 16S rRNA + S-adenosyl-L-homocysteine + H(+). Specifically methylates the N4 position of cytidine in position 1402 (C1402) of 16S rRNA. The polypeptide is Ribosomal RNA small subunit methyltransferase H (Rickettsia prowazekii (strain Madrid E)).